Consider the following 184-residue polypeptide: Interferon alpha-2 (184 aa).

A signal peptide spans 1 to 23 (MALPFSLLMALVVLSCHSSCSLG). 2 disulfides stabilise this stretch: cysteine 24/cysteine 122 and cysteine 52/cysteine 162.

This sequence belongs to the alpha/beta interferon family. In terms of assembly, interacts with IFNAR2.

Its subcellular location is the secreted. Produced by macrophages, IFN-alpha have antiviral activities. The polypeptide is Interferon alpha-2 (Equus caballus (Horse)).